The primary structure comprises 113 residues: Transcriptional activator RamA (113 aa).

The region spanning 9–107 (DTIVEWIDDN…HQPPGAYRKE (99 aa)) is the HTH araC/xylS-type domain. 2 DNA-binding regions (H-T-H motif) span residues 26-47 (EDIARHAGYSKWHLQRLFLQYK) and 74-97 (VYEICLRYGFESQQTFTRIFTRTF).

In terms of biological role, probable transcriptional activator. The sequence is that of Transcriptional activator RamA (ramA) from Enterobacter cloacae.